We begin with the raw amino-acid sequence, 394 residues long: Glycerol-1-phosphate dehydrogenase [NAD(P)+] (394 aa).

NAD(+) contacts are provided by residues Asp-54, 116 to 120 (GTIHD), and 138 to 141 (TAPS). Asp-143 provides a ligand contact to substrate. Ser-147 contributes to the NAD(+) binding site. Position 190 (Asp-190) interacts with substrate. Asp-190 and His-270 together coordinate Ni(2+). Residue His-274 participates in substrate binding. His-290 serves as a coordination point for Ni(2+).

Belongs to the glycerol-1-phosphate dehydrogenase family. As to quaternary structure, homodimer. Ni(2+) is required as a cofactor.

Its subcellular location is the cytoplasm. The catalysed reaction is sn-glycerol 1-phosphate + NAD(+) = dihydroxyacetone phosphate + NADH + H(+). It catalyses the reaction sn-glycerol 1-phosphate + NADP(+) = dihydroxyacetone phosphate + NADPH + H(+). Functionally, catalyzes the NAD(P)H-dependent reduction of dihydroxyacetonephosphate (DHAP or glycerone phosphate) to glycerol 1-phosphate (G1P). The G1P thus generated is probably used for the synthesis of phosphoglycerolipids in Gram-positive bacterial species. This chain is Glycerol-1-phosphate dehydrogenase [NAD(P)+], found in Bacillus velezensis (strain DSM 23117 / BGSC 10A6 / LMG 26770 / FZB42) (Bacillus amyloliquefaciens subsp. plantarum).